A 340-amino-acid chain; its full sequence is MADTATTASAAAASAASASSDAPPFQLGKPRFQQTSFYGRFRHFLDIIDPRTLFVTERRLREAVQLLEDYKHGTLRPGVTNEQLWSAQKIKQAILHPDTNEKIFMPFRMSGYIPFGTPIVVGLLLPNQTLASTVFWQWLNQSHNACVNYANRNATKPSPASKFIQGYLGAVISAVSIAVGLNVLVQKANKFTPATRLLIQRFVPFPAVASANICNVVLMRYGELEEGIDVLDSDGNLVGSSKIAARHALLETALTRVVLPMPILVLPPIVMSMLEKTALLQARPRLLLPVQSLVCLAAFGLALPLAISLFPQMSEIETSQLEPEIAQATSSRTVVYNKGL.

A run of 4 helical transmembrane segments spans residues 103-123 (IFMPFRMSGYIPFGTPIVVGL), 163-183 (FIQGYLGAVISAVSIAVGLNV), 254-274 (LTRVVLPMPILVLPPIVMSML), and 287-307 (LLPVQSLVCLAAFGLALPLAI).

This sequence belongs to the sideroflexin family. In terms of tissue distribution, primarily expressed in the brain.

It localises to the mitochondrion inner membrane. It catalyses the reaction citrate(in) = citrate(out). In terms of biological role, mitochondrial amino-acid transporter. Transports citrate. Does not act as a serine transporter: not able to mediate transport of serine into mitochondria. In brown adipose tissue, plays a role in the regulation of UCP1-dependent thermogenesis probably by supporting mitochondrial glycerol-3-phosphate utilization. The sequence is that of Sideroflexin-5 from Homo sapiens (Human).